The sequence spans 223 residues: Ion-translocating oxidoreductase complex subunit E (223 aa).

6 helical membrane-spanning segments follow: residues N17–T37, L40–F60, I70–A90, E94–A114, F129–V149, and W182–V202.

This sequence belongs to the NqrDE/RnfAE family. As to quaternary structure, the complex is composed of six subunits: RnfA, RnfB, RnfC, RnfD, RnfE and RnfG.

The protein resides in the cell inner membrane. Its function is as follows. Part of a membrane-bound complex that couples electron transfer with translocation of ions across the membrane. The chain is Ion-translocating oxidoreductase complex subunit E from Paramagnetospirillum magneticum (strain ATCC 700264 / AMB-1) (Magnetospirillum magneticum).